A 412-amino-acid polypeptide reads, in one-letter code: Phosphoglycerate kinase (412 aa).

Residues 24-26, arginine 47, 70-73, arginine 130, and arginine 167 each bind substrate; these read DLN and HLGR. ATP is bound by residues lysine 217, glycine 312, glutamate 343, and 369–372; that span reads GGDS.

The protein belongs to the phosphoglycerate kinase family. Monomer.

The protein localises to the cytoplasm. It carries out the reaction (2R)-3-phosphoglycerate + ATP = (2R)-3-phospho-glyceroyl phosphate + ADP. Its pathway is carbohydrate degradation; glycolysis; pyruvate from D-glyceraldehyde 3-phosphate: step 2/5. The protein is Phosphoglycerate kinase of Kineococcus radiotolerans (strain ATCC BAA-149 / DSM 14245 / SRS30216).